Reading from the N-terminus, the 290-residue chain is Poly-beta-1,6-N-acetyl-D-glucosamine N-deacetylase (290 aa).

A signal peptide spans 1-28 (MKYRKFIILVLSILIILPVSTLDGHHIA). In terms of domain architecture, NodB homology spans 114 to 290 (RSVWINFDDM…KRWDGFHEKD (177 aa)).

This sequence belongs to the polysaccharide deacetylase family.

It is found in the secreted. The protein localises to the cell wall. Its function is as follows. Catalyzes the N-deacetylation of poly-beta-1,6-N-acetyl-D-glucosamine (PNAG, also referred to as PIA), a biofilm adhesin polysaccharide. N-deacetylation is crucial for attachment of the polysaccharide to the bacterial cell surface; it leads to the introduction of positive charges in the otherwise neutral PIA polymer, allowing electrostatic interactions. This Staphylococcus aureus (strain NCTC 8325 / PS 47) protein is Poly-beta-1,6-N-acetyl-D-glucosamine N-deacetylase (icaB).